We begin with the raw amino-acid sequence, 309 residues long: Mas-related G-protein coupled receptor member E (309 aa).

At 1–21 the chain is on the extracellular side; that stretch reads MSLRVHTHSPSTQGDMAFNLT. The N-linked (GlcNAc...) asparagine glycan is linked to N19. Residues 22–42 form a helical membrane-spanning segment; the sequence is ILSLTELLSLGGLLGNGVALW. Residues 43–59 are Cytoplasmic-facing; it reads LLNQNVYRNPFSIYLLD. The chain crosses the membrane as a helical span at residues 60–80; the sequence is VACADLIFLCCHMVAIIPELL. Topologically, residues 81–91 are extracellular; sequence QDQLNFPEFVH. Residues 92 to 112 form a helical membrane-spanning segment; sequence ISLIMLRFFCYIVGLSLLVAI. Residues 113–132 are Cytoplasmic-facing; that stretch reads STEQCLATLFPSGYLCRRPR. Residues 133–153 form a helical membrane-spanning segment; that stretch reads YLTTCVCAFIWVLCLLLDLLL. Over 154-168 the chain is Extracellular; the sequence is SGACTQFFGAPSYHL. The chain crosses the membrane as a helical span at residues 169–189; that stretch reads CGMLWLVVAVLLAALCCTMCV. Topologically, residues 190-212 are cytoplasmic; the sequence is TSLLLLLRVERGPERHQPRGFPT. The chain crosses the membrane as a helical span at residues 213–233; sequence LVLLVILLFLFCGLPFGIFWL. At 234–247 the chain is on the extracellular side; that stretch reads SKNLSWHTPLYFYH. N-linked (GlcNAc...) asparagine glycosylation occurs at N236. The helical transmembrane segment at 248–268 threads the bilayer; that stretch reads FSFFMASVHSAAKPAIYFFLG. Residues 269–309 lie on the Cytoplasmic side of the membrane; sequence STPGQRFQEPLRLVLQRALGDEAELGAVREASQGGLVDMTV.

It belongs to the G-protein coupled receptor 1 family. Mas subfamily.

It localises to the cell membrane. Functionally, orphan receptor. May regulate nociceptor function and/or development, including the sensation or modulation of pain. The sequence is that of Mas-related G-protein coupled receptor member E (Mrgpre) from Rattus norvegicus (Rat).